Consider the following 184-residue polypeptide: GTP cyclohydrolase 1 (184 aa).

Zn(2+)-binding residues include cysteine 75, histidine 78, and cysteine 146.

It belongs to the GTP cyclohydrolase I family. As to quaternary structure, homomer.

The enzyme catalyses GTP + H2O = 7,8-dihydroneopterin 3'-triphosphate + formate + H(+). It participates in cofactor biosynthesis; 7,8-dihydroneopterin triphosphate biosynthesis; 7,8-dihydroneopterin triphosphate from GTP: step 1/1. The protein is GTP cyclohydrolase 1 of Streptococcus pneumoniae (strain ATCC 700669 / Spain 23F-1).